Here is a 148-residue protein sequence, read N- to C-terminus: D-aminoacyl-tRNA deacylase (148 aa).

A Gly-cisPro motif, important for rejection of L-amino acids motif is present at residues 137–138; the sequence is GP.

This sequence belongs to the DTD family. In terms of assembly, homodimer.

The protein localises to the cytoplasm. The catalysed reaction is glycyl-tRNA(Ala) + H2O = tRNA(Ala) + glycine + H(+). The enzyme catalyses a D-aminoacyl-tRNA + H2O = a tRNA + a D-alpha-amino acid + H(+). An aminoacyl-tRNA editing enzyme that deacylates mischarged D-aminoacyl-tRNAs. Also deacylates mischarged glycyl-tRNA(Ala), protecting cells against glycine mischarging by AlaRS. Acts via tRNA-based rather than protein-based catalysis; rejects L-amino acids rather than detecting D-amino acids in the active site. By recycling D-aminoacyl-tRNA to D-amino acids and free tRNA molecules, this enzyme counteracts the toxicity associated with the formation of D-aminoacyl-tRNA entities in vivo and helps enforce protein L-homochirality. This chain is D-aminoacyl-tRNA deacylase, found in Finegoldia magna (strain ATCC 29328 / DSM 20472 / WAL 2508) (Peptostreptococcus magnus).